A 163-amino-acid chain; its full sequence is MPSFDIVSEVDLQEARNAVDNASREVESRFDFRNVEASFELNDARKTIKVLSESDFQVNQLLDILRAKLLKRGIEGSSLDVPENIVHSGKTWFVEAKLKQGIESATQKKIVKMIKDSKLKVQAQIQGDEIRVTGKSRDDLQAVMAMVRGGDLGQPFQFKNFRD.

The protein belongs to the YajQ family.

Nucleotide-binding protein. In Shigella dysenteriae serotype 1 (strain Sd197), this protein is Nucleotide-binding protein YajQ.